The chain runs to 465 residues: uncharacterized protein (465 aa).

A TRAM domain is found at 1–50 (MEITDLAAEGNALCRIDDMVMFVPFAAPGDRCTVQVVKKKRNFMQGRIVS). 4 residues coordinate [4Fe-4S] cluster: cysteine 63, cysteine 69, cysteine 72, and cysteine 168. 4 residues coordinate S-adenosyl-L-methionine: glutamine 293, tyrosine 322, glutamate 343, and aspartate 392. Catalysis depends on cysteine 419, which acts as the Nucleophile.

The protein belongs to the class I-like SAM-binding methyltransferase superfamily. RNA M5U methyltransferase family.

This is an uncharacterized protein from Porphyromonas gingivalis (strain ATCC BAA-308 / W83).